A 418-amino-acid polypeptide reads, in one-letter code: Tyrosine--tRNA ligase 1 (418 aa).

L-tyrosine is bound at residue Y34. The short motif at 39-48 (PTADSLHIGH) is the 'HIGH' region element. Residues Y169 and Q173 each coordinate L-tyrosine. Residues 230 to 234 (KFGKT) carry the 'KMSKS' region motif. ATP is bound at residue K233. One can recognise an S4 RNA-binding domain in the interval 352-418 (TVLIDLLVES…GKKKYFLIRY (67 aa)).

It belongs to the class-I aminoacyl-tRNA synthetase family. TyrS type 1 subfamily. Homodimer.

It localises to the cytoplasm. The catalysed reaction is tRNA(Tyr) + L-tyrosine + ATP = L-tyrosyl-tRNA(Tyr) + AMP + diphosphate + H(+). Catalyzes the attachment of tyrosine to tRNA(Tyr) in a two-step reaction: tyrosine is first activated by ATP to form Tyr-AMP and then transferred to the acceptor end of tRNA(Tyr). This is Tyrosine--tRNA ligase 1 from Bacillus cereus (strain ATCC 10987 / NRS 248).